The primary structure comprises 150 residues: Flagellar assembly factor FliW (150 aa).

This sequence belongs to the FliW family. As to quaternary structure, interacts with translational regulator CsrA and flagellin(s).

The protein resides in the cytoplasm. Acts as an anti-CsrA protein, binds CsrA and prevents it from repressing translation of its target genes, one of which is flagellin. Binds to flagellin and participates in the assembly of the flagellum. The sequence is that of Flagellar assembly factor FliW from Leptospira borgpetersenii serovar Hardjo-bovis (strain L550).